The chain runs to 476 residues: tRNA(Ile)-lysidine synthase (476 aa).

30 to 35 (SGGPDS) is an ATP binding site.

Belongs to the tRNA(Ile)-lysidine synthase family.

The protein resides in the cytoplasm. It carries out the reaction cytidine(34) in tRNA(Ile2) + L-lysine + ATP = lysidine(34) in tRNA(Ile2) + AMP + diphosphate + H(+). Its function is as follows. Ligates lysine onto the cytidine present at position 34 of the AUA codon-specific tRNA(Ile) that contains the anticodon CAU, in an ATP-dependent manner. Cytidine is converted to lysidine, thus changing the amino acid specificity of the tRNA from methionine to isoleucine. The sequence is that of tRNA(Ile)-lysidine synthase from Bacillus cereus (strain ATCC 10987 / NRS 248).